A 340-amino-acid polypeptide reads, in one-letter code: Solute carrier family 35 member G3 (340 aa).

Residues 11-31 (PDFTQPSPPSTPSSLTSNHHN) form a disordered region. The next 9 helical transmembrane spans lie at 39–59 (TKGL…VGPF), 69–89 (LPSL…ALIL), 107–127 (FLHA…VQVV), 160–180 (AWCG…PGLG), 189–209 (LYTA…SLGL), 223–243 (TVAF…LFVL), 257–277 (CMVA…YAVT), 283–303 (LVCA…YYVL), and 307–327 (VAPS…IITA). Residues 51-176 (LSAGFVGPFS…STLGLIIIVG (126 aa)) form the EamA 1 domain. An EamA 2 domain is found at 223 to 327 (TVAFLFGLVG…VLGSIAIITA (105 aa)).

This sequence belongs to the SLC35G solute transporter family.

It localises to the membrane. This Rattus norvegicus (Rat) protein is Solute carrier family 35 member G3 (Slc35g3).